We begin with the raw amino-acid sequence, 197 residues long: Short chain dehydrogenase ausX (197 aa).

Ile49, Asp95, Arg157, and Tyr189 together coordinate NADP(+). Tyr189 (proton acceptor) is an active-site residue. Tyr189 functions as the Proton donor in the catalytic mechanism.

The protein belongs to the short-chain dehydrogenases/reductases (SDR) family.

Its pathway is secondary metabolite biosynthesis; terpenoid biosynthesis. Functionally, short chain dehydrogenase; part of the gene cluster A that mediates the biosynthesis of austinol and dehydroaustinol, two fungal meroterpenoids. The first step of the pathway is the synthesis of 3,5-dimethylorsellinic acid by the polyketide synthase ausA. 3,5-dimethylorsellinic acid is then prenylated by the polyprenyl transferase ausN. Further epoxidation by the FAD-dependent monooxygenase ausM and cyclization by the probable terpene cyclase ausL lead to the formation of protoaustinoid A. Protoaustinoid A is then oxidized to spiro-lactone preaustinoid A3 by the combined action of the FAD-binding monooxygenases ausB and ausC, and the dioxygenase ausE. Acid-catalyzed keto-rearrangement and ring contraction of the tetraketide portion of preaustinoid A3 by ausJ lead to the formation of preaustinoid A4. The aldo-keto reductase ausK, with the help of ausH, is involved in the next step by transforming preaustinoid A4 into isoaustinone which is in turn hydroxylated by the P450 monooxygenase ausI to form austinolide. Finally, the cytochrome P450 monooxygenase ausG modifies austinolide to austinol. Austinol can be further modified to dehydroaustinol which forms a diffusible complex with diorcinol that initiates conidiation. Due to genetic rearrangements of the clusters and the subsequent loss of some enzymes, the end products of the Emericella nidulans austinoid biosynthesis clusters are austinol and dehydroaustinol, even if additional enzymes, such as the O-acetyltransferase ausQ and the cytochrome P450 monooxygenase ausR are still functional. The chain is Short chain dehydrogenase ausX from Emericella nidulans (strain FGSC A4 / ATCC 38163 / CBS 112.46 / NRRL 194 / M139) (Aspergillus nidulans).